The chain runs to 674 residues: ATP-dependent DNA helicase Hel308 (674 aa).

ATP-binding positions include Gln27 and 44–51 (VPTAAGKT). One can recognise a Helicase ATP-binding domain in the interval 31-197 (IEQFRKGKNI…WLNASLIKSS (167 aa)). The short motif at 142–145 (DEIH) is the DEAH box element. The Helicase C-terminal domain occupies 224–411 (DINLLVKETV…PEKVRFNTLA (188 aa)).

The protein belongs to the helicase family. Hel308 subfamily. As to quaternary structure, monomer.

It carries out the reaction Couples ATP hydrolysis with the unwinding of duplex DNA by translocating in the 3'-5' direction.. It catalyses the reaction ATP + H2O = ADP + phosphate + H(+). DNA-dependent ATPase and 3'-5' DNA helicase that may be involved in repair of stalled replication forks. The sequence is that of ATP-dependent DNA helicase Hel308 from Thermoplasma volcanium (strain ATCC 51530 / DSM 4299 / JCM 9571 / NBRC 15438 / GSS1).